We begin with the raw amino-acid sequence, 579 residues long: MFS-type transporter sphD (579 aa).

Positions 17-62 (SAFAVRAEPDSEPVSEKQGTAETDAETGAGGTEVPAERNGEDDVER) are disordered. Basic and acidic residues predominate over residues 51-62 (PAERNGEDDVER). 8 helical membrane passes run 73–93 (AFIGLAASMFVFQVDATALGI), 110–130 (FWANLSYTLCGLVMQPVWASI), 138–158 (PPLYVSMALFFIGSIVFAVAQ), 168–188 (VLQGFGGGGIDVLAEVILADM), 200–220 (LMAIPMAIGNIMGPSVGALFA), 227–247 (WIGWVNLPLLGIGTPLVFFFL), 267–287 (WIGMVLVVVGITIFVLPLSWA), and 294–314 (GAWQTLVPLFLGVAVLVIFAF). Asn335 is a glycosylation site (N-linked (GlcNAc...) asparagine). 6 consecutive transmembrane segments (helical) span residues 338–358 (LVGGFLHGAVLVSLLQYLPLI), 367–391 (AILSAVSLLPTVIISVVVAAISMML), 398–419 (YVWILRLAWVILTLGTGLLALF), 429–449 (LGLPILWGAGVALLRLNLLPM), 460–480 (GLAIGQFLTIRMFGGLVGLTI), and 541–561 (FQTIFYTMTGLSGLGLVTSLF).

It belongs to the major facilitator superfamily.

It localises to the membrane. Its function is as follows. MFS-type transporter; part of the gene cluster that mediates the biosynthesis of sphingofungins, bioactive molecules acting as sphingolipid inhibitors via inhibiting serine palmitoyl transferase (SPT). The protein is MFS-type transporter sphD of Aspergillus fumigatus (strain CBS 144.89 / FGSC A1163 / CEA10) (Neosartorya fumigata).